Here is a 102-residue protein sequence, read N- to C-terminus: Small ubiquitin-related modifier 1-A (102 aa).

A disordered region spans residues 1–20 (MSDQEAKPSSEDLGDKKDGG). The Ubiquitin-like domain occupies 21-98 (DYIKLKVIGQ…IEVYQEQTGG (78 aa)). Gly-98 participates in a covalent cross-link: Glycyl lysine isopeptide (Gly-Lys) (interchain with K-? in acceptor proteins). Residues 99-102 (HSTF) constitute a propeptide that is removed on maturation.

The protein belongs to the ubiquitin family. SUMO subfamily. Interacts with sae2, ube2i, ranbp2, pias1 and pias2. Covalently attached to a number of proteins including rangap1 and ranbp2. Interacts with sox9 and sox10. Post-translationally, cleavage of precursor form by a sentrin-specific protease is necessary for function.

Its subcellular location is the nucleus membrane. The protein localises to the nucleus speckle. It localises to the cytoplasm. It is found in the nucleus. The protein resides in the PML body. Its subcellular location is the cell membrane. Ubiquitin-like protein that can be covalently attached to proteins as a monomer or a lysine-linked polymer. Covalent attachment via an isopeptide bond to its substrates requires prior activation by the E1 complex sae1-sae2 and linkage to the E2 enzyme ube2i. This post-translational modification on lysine residues of proteins plays a crucial role in a number of cellular processes such as nuclear transport, DNA replication and repair, mitosis and signal transduction. Polymeric sumo1 chains are also susceptible to polyubiquitination which functions as a signal for proteasomal degradation of modified proteins. This Xenopus laevis (African clawed frog) protein is Small ubiquitin-related modifier 1-A (sumo1-a).